Here is a 159-residue protein sequence, read N- to C-terminus: 2-C-methyl-D-erythritol 2,4-cyclodiphosphate synthase (159 aa).

Residues Asp-10 and His-12 each contribute to the a divalent metal cation site. Residues 10 to 12 and 36 to 37 contribute to the 4-CDP-2-C-methyl-D-erythritol 2-phosphate site; these read DVH and HS. An a divalent metal cation-binding site is contributed by His-44. 4-CDP-2-C-methyl-D-erythritol 2-phosphate is bound by residues 58–60, 63–67, 102–108, 134–137, Phe-141, and Arg-144; these read DIG, FPDTD, AQAPKMA, and TTTE.

This sequence belongs to the IspF family. As to quaternary structure, homotrimer. A divalent metal cation is required as a cofactor.

It catalyses the reaction 4-CDP-2-C-methyl-D-erythritol 2-phosphate = 2-C-methyl-D-erythritol 2,4-cyclic diphosphate + CMP. It participates in isoprenoid biosynthesis; isopentenyl diphosphate biosynthesis via DXP pathway; isopentenyl diphosphate from 1-deoxy-D-xylulose 5-phosphate: step 4/6. Its function is as follows. Involved in the biosynthesis of isopentenyl diphosphate (IPP) and dimethylallyl diphosphate (DMAPP), two major building blocks of isoprenoid compounds. Catalyzes the conversion of 4-diphosphocytidyl-2-C-methyl-D-erythritol 2-phosphate (CDP-ME2P) to 2-C-methyl-D-erythritol 2,4-cyclodiphosphate (ME-CPP) with a corresponding release of cytidine 5-monophosphate (CMP). The chain is 2-C-methyl-D-erythritol 2,4-cyclodiphosphate synthase from Shewanella frigidimarina (strain NCIMB 400).